The sequence spans 197 residues: Elongation factor Ts (197 aa).

Residues 81–84 (TDFV) are involved in Mg(2+) ion dislocation from EF-Tu.

Belongs to the EF-Ts family.

It is found in the cytoplasm. Its function is as follows. Associates with the EF-Tu.GDP complex and induces the exchange of GDP to GTP. It remains bound to the aminoacyl-tRNA.EF-Tu.GTP complex up to the GTP hydrolysis stage on the ribosome. This chain is Elongation factor Ts, found in Fervidobacterium nodosum (strain ATCC 35602 / DSM 5306 / Rt17-B1).